Reading from the N-terminus, the 181-residue chain is Urease accessory protein UreE (181 aa).

The disordered stretch occupies residues 143–181; that stretch reads FDPEPGAYNQAGQGHSHGHSHGHSHNHDHEHSHGHKHAH.

Belongs to the UreE family.

The protein resides in the cytoplasm. Its function is as follows. Involved in urease metallocenter assembly. Binds nickel. Probably functions as a nickel donor during metallocenter assembly. This Marinobacter nauticus (strain ATCC 700491 / DSM 11845 / VT8) (Marinobacter aquaeolei) protein is Urease accessory protein UreE.